The following is a 288-amino-acid chain: DegV domain-containing protein (288 aa).

The region spanning 3–282 is the DegV domain; the sequence is IAVMTDSTSY…SGGLGLGYVG (280 aa). Positions 62 and 95 each coordinate hexadecanoate.

Its function is as follows. May bind long-chain fatty acids, such as palmitate, and may play a role in lipid transport or fatty acid metabolism. The polypeptide is DegV domain-containing protein (Staphylococcus aureus).